A 381-amino-acid polypeptide reads, in one-letter code: Alpha-methylacyl-CoA racemase (381 aa).

Residues Arg36 and 54–57 (LDLK) contribute to the substrate site. N6-acetyllysine is present on Lys57. Lys86 and Lys100 each carry N6-acetyllysine; alternate. An N6-succinyllysine; alternate mark is found at Lys86 and Lys100. Lys117 carries the post-translational modification N6-acetyllysine. Position 120–125 (120–125 (GHDINY)) interacts with substrate. The active-site Proton acceptor is His121. The active-site Proton donor is Asp151. An N6-succinyllysine modification is found at Lys267. Positions 316 to 344 (TDGEQLPSPRPAPLLSRTPAVPSAKRDPS) are disordered. A Microbody targeting signal motif is present at residues 379–381 (ANL).

Belongs to the CoA-transferase III family. As to quaternary structure, monomer.

It localises to the peroxisome. Its subcellular location is the mitochondrion. It catalyses the reaction a (2S)-2-methylacyl-CoA = a (2R)-2-methylacyl-CoA. The enzyme catalyses (25R)-3alpha,7alpha,12alpha-trihydroxy-5beta-cholestan-26-oyl-CoA = (25S)-3alpha,7alpha,12alpha-trihydroxy-5beta-cholestan-26-oyl-CoA. It carries out the reaction (2R,6)-dimethylheptanoyl-CoA = (2S,6)-dimethylheptanoyl-CoA. The protein operates within lipid metabolism; bile acid biosynthesis. It functions in the pathway lipid metabolism; fatty acid metabolism. Its function is as follows. Catalyzes the interconversion of (R)- and (S)-stereoisomers of alpha-methyl-branched-chain fatty acyl-CoA esters. Acts only on coenzyme A thioesters, not on free fatty acids, and accepts as substrates a wide range of alpha-methylacyl-CoAs, including pristanoyl-CoA, trihydroxycoprostanoyl-CoA (an intermediate in bile acid synthesis), and arylpropionic acids like the anti-inflammatory drug ibuprofen (2-(4-isobutylphenyl)propionic acid) but neither 3-methyl-branched nor linear-chain acyl-CoAs. In Mus musculus (Mouse), this protein is Alpha-methylacyl-CoA racemase (Amacr).